Here is a 330-residue protein sequence, read N- to C-terminus: Glucosyltransferase 3 (330 aa).

Threonine 16 contacts UDP. Positions 106 to 111 (MFSGNF) are substrate protein-binding loop. UDP is bound by residues arginine 179, 211 to 214 (YRPD), and 244 to 249 (SYKLGS).

It belongs to the Gtf3 glucosyltransferase family. As to quaternary structure, homotetramer; a dimer of dimers. Requires In vitro glycosyltransferase activity is metal-independent. as cofactor.

The protein operates within protein modification; protein glycosylation. Required for polymorphic O-glycosylation of the serine-rich repeat protein Fap1. Catalyzes the second step in glycosylation of the serine-rich repeat protein in this bacteria. Transfers glucose from UDP-glucose to the terminal GlcNAc moiety of 3-O-(N-acetyl-alpha-D-glucosaminyl)-L-seryl-[protein] which results from the first glycosylation step of Fap1; does not use other sugar nucleotides as substrates. The polypeptide is Glucosyltransferase 3 (Streptococcus parasanguinis).